Consider the following 502-residue polypeptide: Glutamate--tRNA ligase (502 aa).

The 'HIGH' region signature appears at 9-19 (PSPTGDPHVGT). The Zn(2+) site is built by Cys-106, Cys-108, Cys-133, and His-135. A 'KMSKS' region motif is present at residues 250-254 (KLSKR). Lys-253 contributes to the ATP binding site.

The protein belongs to the class-I aminoacyl-tRNA synthetase family. Glutamate--tRNA ligase type 1 subfamily. As to quaternary structure, monomer. Zn(2+) is required as a cofactor.

It localises to the cytoplasm. It carries out the reaction tRNA(Glu) + L-glutamate + ATP = L-glutamyl-tRNA(Glu) + AMP + diphosphate. Catalyzes the attachment of glutamate to tRNA(Glu) in a two-step reaction: glutamate is first activated by ATP to form Glu-AMP and then transferred to the acceptor end of tRNA(Glu). The sequence is that of Glutamate--tRNA ligase from Protochlamydia amoebophila (strain UWE25).